Here is a 417-residue protein sequence, read N- to C-terminus: MSLSNKLPVTDVDLKGKRVLIRVDFNVPLDENKNVTNPQRIVGALPTIKYAIDNGAKAVVLMSHLGRPDGKVNPKYSLKPVVPVLEKLLGKSVTFAEDCVGPQTEETVNKASDGQVILLENLRFHAEEEGSSKDAEGKKVKADKADVDAFRKGLTALGDVYVNDAFGTAHRAHSSMVGVDLPQKAAGFLVKKELEYFAKALESPARPFLAILGGAKVSDKIQLIDNLLPKVNSLIITGGMAFTFKKTLENVKIGNSLFDEAGSKIVGEIVEKAKKYNVEIVLPVDYVTADKFSADATVGAATDATGIPDGYMGLDVGPESVKLYQKTIAEAKTILWNGPPGVFELKPFASATEATLDAAVKAAESGSIVIIGGGDTATVAAKYKVEDKISHVSTGGGASLELLEGKELPGVAALSSK.

V23, D24, F25, N26, Q39, R40, S63, H64, G66, R67, L122, R123, H170, and R171 together coordinate (2R)-3-phosphoglycerate. G214 contacts ADP. G214 is a CDP binding site. Positions 215 and 216 each coordinate AMP. A215 is an ATP binding site. Residue A215 participates in Mg(2+) binding. D219 is a binding site for CDP. D219 contributes to the Mg(2+) binding site. An AMP-binding site is contributed by K220. K220 lines the ATP pocket. ADP is bound at residue G238. Residue G238 coordinates CDP. AMP contacts are provided by G239 and G313. Residues G239 and G313 each coordinate ATP. Positions 338 and 343 each coordinate CDP. Residue F343 coordinates ADP. Position 344 (E344) interacts with AMP. ATP is bound by residues E344, D375, and T376. Mg(2+) is bound at residue D375.

Belongs to the phosphoglycerate kinase family. Monomer. The cofactor is Mg(2+).

It is found in the cytoplasm. The protein resides in the mitochondrion. It catalyses the reaction (2R)-3-phosphoglycerate + ATP = (2R)-3-phospho-glyceroyl phosphate + ADP. The protein operates within carbohydrate degradation; glycolysis; pyruvate from D-glyceraldehyde 3-phosphate: step 2/5. Its function is as follows. Catalyzes one of the two ATP producing reactions in the glycolytic pathway via the reversible conversion of 1,3-diphosphoglycerate to 3-phosphoglycerate. Both L- and D- forms of purine and pyrimidine nucleotides can be used as substrates, but the activity is much lower on pyrimidines. Negatively regulates the biosynthesis of acetyl-CoA from pyruvate in the mitochondrion. The chain is Phosphoglycerate kinase (PGKA) from Penicillium citrinum.